The sequence spans 346 residues: Heparan sulfate glucosamine 3-O-sulfotransferase 5 (346 aa).

Residues 1–12 (MLFKQQAWLRQK) lie on the Cytoplasmic side of the membrane. A helical; Signal-anchor for type II membrane protein membrane pass occupies residues 13-32 (LLVLGSLAVGSLLYLVARVG). Residues 33–346 (SLDRLQPICP…QITGRTLNWP (314 aa)) are Lumenal-facing. Residue 100–104 (KGGTR) participates in 3'-phosphoadenylyl sulfate binding. Residues 122–128 (EIHFFDN) and 155–158 (KSPA) contribute to the substrate site. 3'-phosphoadenylyl sulfate contacts are provided by Arg183 and Ser191. 226–227 (YK) is a binding site for substrate. N-linked (GlcNAc...) asparagine glycosylation occurs at Asn287. A 3'-phosphoadenylyl sulfate-binding site is contributed by Tyr293. Residues Cys294 and Cys304 are joined by a disulfide bond. 309-313 (KGRIH) contacts 3'-phosphoadenylyl sulfate.

This sequence belongs to the sulfotransferase 1 family. As to expression, highly expressed in skeletal muscle and fetal brain, and also found in adult brain, spinal cord, cerebellum and colon.

The protein resides in the golgi apparatus membrane. It carries out the reaction alpha-D-glucosaminyl-[heparan sulfate](n) + 3'-phosphoadenylyl sulfate = 3-sulfo-alpha-D-glucosaminyl-[heparan sulfate](n) + adenosine 3',5'-bisphosphate + H(+). Sulfotransferase that utilizes 3'-phospho-5'-adenylyl sulfate (PAPS) to catalyze the transfer of a sulfo group to position 3 of glucosamine residues in heparan. Catalyzes the rate limiting step in the biosynthesis of heparan sulfate (HSact). This modification is a crucial step in the biosynthesis of anticoagulant heparan sulfate as it completes the structure of the antithrombin pentasaccharide binding site. Also generates GlcUA-GlcNS or IdoUA-GlcNS and IdoUA2S-GlcNH2. The substrate-specific O-sulfation generates an enzyme-modified heparan sulfate which acts as a binding receptor to Herpes simplex virus-1 (HSV-1) and permits its entry. The protein is Heparan sulfate glucosamine 3-O-sulfotransferase 5 (HS3ST5) of Homo sapiens (Human).